The chain runs to 181 residues: MDPRTLSALKDAIRSIPDYPKPGIVFRDITTLLGDPGAFRRAVDALVHPFAGGRIDRVAGIEARGFILGGAVAHQLSSGFVPIRKKGKLPHTTVSIAYALEYGTDEMEIHSDAVKPGDRVVLVDDLIATGGTAEAAVNLLRQIGAEVVAACFVIDLPALGGAARLRALDVPVFTLVEFEGH.

It belongs to the purine/pyrimidine phosphoribosyltransferase family. In terms of assembly, homodimer.

Its subcellular location is the cytoplasm. The enzyme catalyses AMP + diphosphate = 5-phospho-alpha-D-ribose 1-diphosphate + adenine. Its pathway is purine metabolism; AMP biosynthesis via salvage pathway; AMP from adenine: step 1/1. Catalyzes a salvage reaction resulting in the formation of AMP, that is energically less costly than de novo synthesis. The protein is Adenine phosphoribosyltransferase of Methylobacterium sp. (strain 4-46).